The chain runs to 973 residues: MSLFPQILLRLLFLAFTLKSTSNAEKHDKVDYKDFVRRDDGDTCLRYTTIYSQGEYETTITIPPNSYSNGVSLSNGTLLSTSSPLISTSGQFTSNNVSTTSSQRHNTKTITFFSGTSDYTSVYYDTTGTDDVVYEYHPSSERHKSTNDTWSTNLPTNPTTTAIYSTSGSSNITTPYSNRITNSNTSVNDITSKYLSVGTITLTTISGSDLYTSTFPANGTTSGTVEVVIPTAGTVTETAVSGSELYTSTFPANGTTSGTVEVVIPTAGTRTVTKISGSKFFTTTTDASGTVSGTVEVVLPTAGTNTMTVVSGSRFFTSVVSASGTVSGEQVIVYPTAGMVTETIVSGSEIFNTTYPASGTRTGTVEVVIPTAGTVTETEISGSELYTSTFPANGTTSGTVEVVIPTAGTRTVTKISGSKFFTTTTDASGTVSGTVEVVLPTAGTNTMTVVSGSRFFTSVVSASGTVSGEHIIVEPTAGVVTETVVSGSVGYTTTYPAHDTVSGTVEVVEPTAGVVTETVVSGSVGYTTAYPAHDTVSGTVEVVEPTAGVVTETVVSGSVGYTTTYPAHDTVSGTVEVVEPTAGVVTETVVSGSVGYTTTYPAHDTVSGTVEVVEPTAGVVTETVVSGSVGYTTTYPAHDTVSGTVEVVEPTAGVVTETVVSGSVGYTTTYPAHDTVSGTVEVVEPTAGVVTETVVSGSVGYTTTYPAHDTVSGTVEVVEPTAGVVTETVVSGSVGYTTTYPAHDTVSGTVEVVEPTAGVVTETVVSGSVGYTTTYPVQGTVSGTVMIVEPTAGYVTVTTSLGSSSYATTVATASGTSTGTVLQVVPSLFPGCNSKCTSSNAFRILVENDSISPSYLTYRESDGFGIASSNPSPAGSEGIFYYDSTLKRVVTCCDERPYYRTMEGDLAKTYFFIEDEGDGTYKFKLTYGAFSEYLDVKILADSTFFFKAMDSSSSTILNQKVRASNVYFKAVPL.

A signal peptide spans 1–24 (MSLFPQILLRLLFLAFTLKSTSNA). 7 N-linked (GlcNAc...) asparagine glycosylation sites follow: N75, N96, N147, N171, N184, N218, and N253. 18 consecutive repeat copies span residues 198–232 (GTITLTTISGSDLYTSTFPANGTTSGTVEVVIPTA), 233–267 (GTVTETAVSGSELYTSTFPANGTTSGTVEVVIPTA), 268–302 (GTRTVTKISGSKFFTTTTDASGTVSGTVEVVLPTA), 303–337 (GTNTMTVVSGSRFFTSVVSASGTVSGEQVIVYPTA), 338–372 (GMVTETIVSGSEIFNTTYPASGTRTGTVEVVIPTA), 373–407 (GTVTETEISGSELYTSTFPANGTTSGTVEVVIPTA), 408–442 (GTRTVTKISGSKFFTTTTDASGTVSGTVEVVLPTA), 443–477 (GTNTMTVVSGSRFFTSVVSASGTVSGEHIIVEPTA), 478–512 (GVVTETVVSGSVGYTTTYPAHDTVSGTVEVVEPTA), 513–547 (GVVTETVVSGSVGYTTAYPAHDTVSGTVEVVEPTA), 548–582 (GVVTETVVSGSVGYTTTYPAHDTVSGTVEVVEPTA), 583–617 (GVVTETVVSGSVGYTTTYPAHDTVSGTVEVVEPTA), 618–652 (GVVTETVVSGSVGYTTTYPAHDTVSGTVEVVEPTA), 653–687 (GVVTETVVSGSVGYTTTYPAHDTVSGTVEVVEPTA), 688–722 (GVVTETVVSGSVGYTTTYPAHDTVSGTVEVVEPTA), 723–757 (GVVTETVVSGSVGYTTTYPAHDTVSGTVEVVEPTA), 758–792 (GVVTETVVSGSVGYTTTYPVQGTVSGTVMIVEPTA), and 793–828 (GYVTVTTSLGSSSYATTVATASGTSTGTVLQVVPSL). The interval 198 to 828 (GTITLTTISG…GTVLQVVPSL (631 aa)) is 18 X 35 AA approximate tandem repeats. Residues N352 and N393 are each glycosylated (N-linked (GlcNAc...) asparagine). Residues 820 to 973 (TVLQVVPSLF…SNVYFKAVPL (154 aa)) form the DIPSY domain. Residue N848 is glycosylated (N-linked (GlcNAc...) asparagine).

It belongs to the mam3/map4 family.

Its subcellular location is the cell surface. May be involved in agglutination during conjugation or other aspects of colony formation. Induces flocculation when overexpressed. This chain is Putative cell agglutination protein pfl3, found in Schizosaccharomyces pombe (strain 972 / ATCC 24843) (Fission yeast).